The following is a 61-amino-acid chain: Small ribosomal subunit protein uS14B (61 aa).

Positions 24, 27, 40, and 43 each coordinate Zn(2+).

The protein belongs to the universal ribosomal protein uS14 family. Zinc-binding uS14 subfamily. In terms of assembly, part of the 30S ribosomal subunit. Contacts proteins S3 and S10. Zn(2+) serves as cofactor.

Its function is as follows. Binds 16S rRNA, required for the assembly of 30S particles and may also be responsible for determining the conformation of the 16S rRNA at the A site. This chain is Small ribosomal subunit protein uS14B, found in Rhodococcus jostii (strain RHA1).